The sequence spans 215 residues: uncharacterized protein (215 aa).

The segment at 120–147 is disordered; sequence HRAPQGTSSYQEGRRAHEATSAESDDDN.

This is an uncharacterized protein from Homo sapiens (Human).